We begin with the raw amino-acid sequence, 349 residues long: 4-hydroxythreonine-4-phosphate dehydrogenase (349 aa).

Substrate-binding residues include H141 and T142. Residues H176, H221, and H276 each coordinate a divalent metal cation. Residues K284, N293, and R302 each contribute to the substrate site.

This sequence belongs to the PdxA family. Homodimer. Zn(2+) is required as a cofactor. Mg(2+) serves as cofactor. Requires Co(2+) as cofactor.

It is found in the cytoplasm. The enzyme catalyses 4-(phosphooxy)-L-threonine + NAD(+) = 3-amino-2-oxopropyl phosphate + CO2 + NADH. It functions in the pathway cofactor biosynthesis; pyridoxine 5'-phosphate biosynthesis; pyridoxine 5'-phosphate from D-erythrose 4-phosphate: step 4/5. Functionally, catalyzes the NAD(P)-dependent oxidation of 4-(phosphooxy)-L-threonine (HTP) into 2-amino-3-oxo-4-(phosphooxy)butyric acid which spontaneously decarboxylates to form 3-amino-2-oxopropyl phosphate (AHAP). The chain is 4-hydroxythreonine-4-phosphate dehydrogenase from Methylorubrum populi (strain ATCC BAA-705 / NCIMB 13946 / BJ001) (Methylobacterium populi).